Reading from the N-terminus, the 459-residue chain is tRNA modification GTPase MnmE (459 aa).

The (6S)-5-formyl-5,6,7,8-tetrahydrofolate site is built by Arg-23, Glu-88, and Arg-127. The TrmE-type G domain occupies 223–381 (GLDVVIVGKP…LKEYIKDLFF (159 aa)). Asn-233 serves as a coordination point for K(+). GTP-binding positions include 233 to 238 (NVGKSS), 252 to 258 (TEIPGTT), and 277 to 280 (DTAG). Ser-237 contacts Mg(2+). Residues Thr-252, Ile-254, and Thr-257 each contribute to the K(+) site. Residue Thr-258 participates in Mg(2+) binding. Lys-459 contacts (6S)-5-formyl-5,6,7,8-tetrahydrofolate.

The protein belongs to the TRAFAC class TrmE-Era-EngA-EngB-Septin-like GTPase superfamily. TrmE GTPase family. In terms of assembly, homodimer. Heterotetramer of two MnmE and two MnmG subunits. K(+) is required as a cofactor.

It localises to the cytoplasm. Exhibits a very high intrinsic GTPase hydrolysis rate. Involved in the addition of a carboxymethylaminomethyl (cmnm) group at the wobble position (U34) of certain tRNAs, forming tRNA-cmnm(5)s(2)U34. The protein is tRNA modification GTPase MnmE of Clostridium tetani (strain Massachusetts / E88).